We begin with the raw amino-acid sequence, 545 residues long: B3 domain-containing protein Os03g0620500 (545 aa).

The segment at residues 26-119 is a DNA-binding region (TF-B3 1); the sequence is MKCFHRQMSA…RRASGVQERN (94 aa). A disordered region spans residues 111 to 188; that stretch reads RASGVQERNA…SSSEHESSYD (78 aa). The span at 173–186 shows a compositional bias: basic and acidic residues; it reads EEAKESSSSEHESS. The TF-B3 2 DNA-binding region spans 231–331; that stretch reads VTTMKHSNVN…RATVHLLRET (101 aa). The disordered stretch occupies residues 368–400; that stretch reads RRGTMEPSTTNVKKEADNEQCNNGQGKRQEPLN. Positions 441–542 form a DNA-binding region, TF-B3 3; it reads YVSIMNKSNV…AMKVHIIRHN (102 aa).

The protein resides in the nucleus. In Oryza sativa subsp. japonica (Rice), this protein is B3 domain-containing protein Os03g0620500.